Reading from the N-terminus, the 168-residue chain is RxLR effector protein PITG_12737 (168 aa).

Residues 1-20 (MRACAILVVAAAAVLTGSTA) form the signal peptide. The RxLR-dEER signature appears at 54–77 (RRLRKHKTVNTNSEMEYESEAEAR).

It belongs to the RxLR effector family.

It is found in the secreted. The protein resides in the host nucleus. Its subcellular location is the host cytoplasm. In terms of biological role, effector that enhances P.infestans colonization of Nicotiana benthamiana leaves. The polypeptide is RxLR effector protein PITG_12737 (Phytophthora infestans (strain T30-4) (Potato late blight agent)).